The sequence spans 404 residues: Cysteine desulfurase IscS (404 aa).

Pyridoxal 5'-phosphate is bound by residues 75–76 (AT), Asn155, Gln183, and 203–205 (SAH). Lys206 is modified (N6-(pyridoxal phosphate)lysine). Thr243 contributes to the pyridoxal 5'-phosphate binding site. Cys328 acts as the Cysteine persulfide intermediate in catalysis. Residue Cys328 participates in [2Fe-2S] cluster binding.

It belongs to the class-V pyridoxal-phosphate-dependent aminotransferase family. NifS/IscS subfamily. In terms of assembly, homodimer. Forms a heterotetramer with IscU, interacts with other sulfur acceptors. Pyridoxal 5'-phosphate serves as cofactor.

The protein localises to the cytoplasm. The catalysed reaction is (sulfur carrier)-H + L-cysteine = (sulfur carrier)-SH + L-alanine. It functions in the pathway cofactor biosynthesis; iron-sulfur cluster biosynthesis. Its function is as follows. Master enzyme that delivers sulfur to a number of partners involved in Fe-S cluster assembly, tRNA modification or cofactor biosynthesis. Catalyzes the removal of elemental sulfur atoms from cysteine to produce alanine. Functions as a sulfur delivery protein for Fe-S cluster synthesis onto IscU, an Fe-S scaffold assembly protein, as well as other S acceptor proteins. This chain is Cysteine desulfurase IscS, found in Vibrio atlanticus (strain LGP32) (Vibrio splendidus (strain Mel32)).